The following is a 139-amino-acid chain: UPF0310 protein RSal33209_2865 (139 aa).

Belongs to the UPF0310 family.

This Renibacterium salmoninarum (strain ATCC 33209 / DSM 20767 / JCM 11484 / NBRC 15589 / NCIMB 2235) protein is UPF0310 protein RSal33209_2865.